A 158-amino-acid chain; its full sequence is 2-C-methyl-D-erythritol 2,4-cyclodiphosphate synthase (158 aa).

A divalent metal cation is bound by residues Asp9 and His11. 4-CDP-2-C-methyl-D-erythritol 2-phosphate-binding positions include 9–11 (DVH) and 35–36 (HS). An a divalent metal cation-binding site is contributed by His43. Residues 57-59 (DIG), 62-66 (FPDTD), 101-107 (AQAPKMA), 133-136 (TTTE), Phe140, and Arg143 contribute to the 4-CDP-2-C-methyl-D-erythritol 2-phosphate site.

The protein belongs to the IspF family. As to quaternary structure, homotrimer. It depends on a divalent metal cation as a cofactor.

It catalyses the reaction 4-CDP-2-C-methyl-D-erythritol 2-phosphate = 2-C-methyl-D-erythritol 2,4-cyclic diphosphate + CMP. The protein operates within isoprenoid biosynthesis; isopentenyl diphosphate biosynthesis via DXP pathway; isopentenyl diphosphate from 1-deoxy-D-xylulose 5-phosphate: step 4/6. Its function is as follows. Involved in the biosynthesis of isopentenyl diphosphate (IPP) and dimethylallyl diphosphate (DMAPP), two major building blocks of isoprenoid compounds. Catalyzes the conversion of 4-diphosphocytidyl-2-C-methyl-D-erythritol 2-phosphate (CDP-ME2P) to 2-C-methyl-D-erythritol 2,4-cyclodiphosphate (ME-CPP) with a corresponding release of cytidine 5-monophosphate (CMP). In Vibrio campbellii (strain ATCC BAA-1116), this protein is 2-C-methyl-D-erythritol 2,4-cyclodiphosphate synthase.